Here is a 349-residue protein sequence, read N- to C-terminus: Probable inactive tRNA-specific adenosine deaminase-like protein 3 (349 aa).

At Met1 the chain carries N-acetylmethionine. The tract at residues 1–25 (MEPTSGFAEQPGPVKAESEEQEPAQ) is disordered. The CMP/dCMP-type deaminase domain occupies 171–334 (AAMQTHMERA…PDLNHRFQVF (164 aa)). Positions 223, 289, and 292 each coordinate Zn(2+).

It belongs to the cytidine and deoxycytidylate deaminase family. ADAT3 subfamily. Requires Zn(2+) as cofactor.

This is Probable inactive tRNA-specific adenosine deaminase-like protein 3 (Adat3) from Mus musculus (Mouse).